The chain runs to 646 residues: MASGGAFCLIANDGKADKIILAQDLLNSRISNIKNVNKSYGKPDPEPTLSQIEETHMVHFNAHFKPYVPIGFEYNKVRPHTGTPTLGNKLTFGIPQYGDFFHDMVGHHVLGACHSSWQDAPIQGSSQMGAHGQLQTFPRNGYDWDNQTPLEGAVYTLVDPFGRPIVPGTKNAYRNLVYYCEYPGERLYENVRFDVNGNSLDEYSSDVTTLVRKFCIPGDKMTGYKHLVGQEVSVEGTSGPLLCNIHDLHKPHQSKPILTDENDTQRTCTHTNPKFLSQHFPENSHNIQTAGKQDITPITDTTYLDIRRNVQYSCNGPQTPKYYQPPLALWIKLRFWFNENVNLAIPSVSIPFGERFITIKLASQKDLVNEFPGLFVRQSRFIPGRPSRRNIRFKPWFIPGVINEISLTNNELYINNLFVTPEIHNLFVKRVRFSLIRVHKTQVTHTNNNHHDEKLMSALKWPIEYMFIGLKPTWNISDQNPHQHRDWHKFGHVVNAIMQPTHHAEISFQDRDTALPDACSSISDINPVTYPITLPIIKNISVTAHGINLIDKFPSKFCSSYIPFHYGGNSIKTPDDPGAMMITFALKPREEYQPSGHINVSRAREFYISWDTDYVGSITTADLVVSASAINFLLLQNGSAVLRYST.

It belongs to the NCLDV major capsid protein family. As to quaternary structure, homotrimer. The membrane-bound form, but not the cytosolic one, assembles into large complexes. Interacts with the minor capsid proteins M1249L and p17; these interactions form a rigid zipper structure that stabilizes the capsomers.

The protein localises to the virion. The protein resides in the host endoplasmic reticulum membrane. Its subcellular location is the host cytoplasm. It is found in the host cytosol. Capsid protein that self-assembles to form the pseudo-hexameric capsomers of the icosahedral capsid. The capsid is constructed of 2760 pseudo-hexameric capsomers and 12 pentameric capsomers, with a T=277 symmetry, about 200 nm in diameter. The capsid encapsulates the DNA-containing nucleoid, the core shell and the inner membrane. Plays an essential role in virion assembly. Involved in virus attachment to the host cell. The polypeptide is Hexon protein p72 (Ornithodoros (relapsing fever ticks)).